The following is a 697-amino-acid chain: Heat shock protein homolog SSE1 (697 aa).

The segment covering 664–674 (EMAEKLAAQRA) has biased composition (low complexity). Residues 664 to 697 (EMAEKLAAQRAAEQKAQESKAESDKDAEGDIDLD) are disordered. Residues 675 to 691 (AEQKAQESKAESDKDAE) are compositionally biased toward basic and acidic residues.

It belongs to the heat shock protein 70 family.

The protein localises to the cytoplasm. The chain is Heat shock protein homolog SSE1 (SSE1) from Eremothecium gossypii (strain ATCC 10895 / CBS 109.51 / FGSC 9923 / NRRL Y-1056) (Yeast).